The following is a 133-amino-acid chain: Holo-[acyl-carrier-protein] synthase (133 aa).

Mg(2+) contacts are provided by Asp-8 and Glu-58.

The protein belongs to the P-Pant transferase superfamily. AcpS family. Mg(2+) is required as a cofactor.

Its subcellular location is the cytoplasm. It catalyses the reaction apo-[ACP] + CoA = holo-[ACP] + adenosine 3',5'-bisphosphate + H(+). Functionally, transfers the 4'-phosphopantetheine moiety from coenzyme A to a Ser of acyl-carrier-protein. This Erythrobacter litoralis (strain HTCC2594) protein is Holo-[acyl-carrier-protein] synthase.